Reading from the N-terminus, the 681-residue chain is Calpain-C (681 aa).

Residues 18–331 (LWEDPDFPAV…FSTMEVVYLD (314 aa)) enclose the Calpain catalytic domain. A domain III region spans residues 332-481 (TETSNDEEML…ILGTGSFRLS (150 aa)). A linker region spans residues 482 to 514 (CLETQTMILLDPFPALKSTDAERCGGPKVKSVC). The domain IV stretch occupies residues 515–681 (QYEPVYMQLA…HDWIKSILSC (167 aa)). Residues 552-587 (ANIDICRQVIALQDRSGSGRITFQQFKTFMVNLKSW) form the EF-hand domain. Residues Asp-565, Ser-567, Ser-569, and Arg-571 each contribute to the Ca(2+) site.

Belongs to the peptidase C2 family. In terms of tissue distribution, localized to the salivary glands in the larva.

Its subcellular location is the cytoplasm. Functionally, not known; does not seem to have protease activity. The sequence is that of Calpain-C from Drosophila melanogaster (Fruit fly).